The primary structure comprises 302 residues: uncharacterized protein (302 aa).

The protein belongs to the HAD-like hydrolase superfamily.

Its subcellular location is the cytoplasm. The protein localises to the nucleus. This is an uncharacterized protein from Schizosaccharomyces pombe (strain 972 / ATCC 24843) (Fission yeast).